We begin with the raw amino-acid sequence, 176 residues long: Ribosome rescue factor SmrB (176 aa).

Positions 98 to 173 constitute a Smr domain; that stretch reads LDLHGLTQKQ…GTAALLVLVE (76 aa).

Belongs to the SmrB family. Associates with collided ribosomes, but not with correctly translating polysomes.

Its function is as follows. Acts as a ribosome collision sensor. Detects stalled/collided disomes (pairs of ribosomes where the leading ribosome is stalled and a second ribosome has collided with it) and endonucleolytically cleaves mRNA at the 5' boundary of the stalled ribosome. Stalled/collided disomes form a new interface (primarily via the 30S subunits) that binds SmrB. Cleaved mRNA becomes available for tmRNA ligation, leading to ribosomal subunit dissociation and rescue of stalled ribosomes. This chain is Ribosome rescue factor SmrB, found in Yersinia enterocolitica serotype O:8 / biotype 1B (strain NCTC 13174 / 8081).